We begin with the raw amino-acid sequence, 336 residues long: Acetyl-coenzyme A carboxylase carboxyl transferase subunit alpha (336 aa).

A CoA carboxyltransferase C-terminal domain is found at 48–308 (ALEAKVESLR…KSMLIEELQG (261 aa)).

This sequence belongs to the AccA family. In terms of assembly, acetyl-CoA carboxylase is a heterohexamer composed of biotin carboxyl carrier protein (AccB), biotin carboxylase (AccC) and two subunits each of ACCase subunit alpha (AccA) and ACCase subunit beta (AccD).

The protein localises to the cytoplasm. It catalyses the reaction N(6)-carboxybiotinyl-L-lysyl-[protein] + acetyl-CoA = N(6)-biotinyl-L-lysyl-[protein] + malonyl-CoA. It participates in lipid metabolism; malonyl-CoA biosynthesis; malonyl-CoA from acetyl-CoA: step 1/1. Component of the acetyl coenzyme A carboxylase (ACC) complex. First, biotin carboxylase catalyzes the carboxylation of biotin on its carrier protein (BCCP) and then the CO(2) group is transferred by the carboxyltransferase to acetyl-CoA to form malonyl-CoA. The sequence is that of Acetyl-coenzyme A carboxylase carboxyl transferase subunit alpha from Chlorobaculum parvum (strain DSM 263 / NCIMB 8327) (Chlorobium vibrioforme subsp. thiosulfatophilum).